The sequence spans 428 residues: Trigger factor (428 aa).

Residues 163 to 248 enclose the PPIase FKBP-type domain; that stretch reads GDIVDIDFEG…VNDVKVKELP (86 aa).

Belongs to the FKBP-type PPIase family. Tig subfamily.

Its subcellular location is the cytoplasm. The enzyme catalyses [protein]-peptidylproline (omega=180) = [protein]-peptidylproline (omega=0). Involved in protein export. Acts as a chaperone by maintaining the newly synthesized protein in an open conformation. Functions as a peptidyl-prolyl cis-trans isomerase. This chain is Trigger factor, found in Acetivibrio thermocellus (strain ATCC 27405 / DSM 1237 / JCM 9322 / NBRC 103400 / NCIMB 10682 / NRRL B-4536 / VPI 7372) (Clostridium thermocellum).